A 190-amino-acid polypeptide reads, in one-letter code: Probable RNA-binding protein 18 (190 aa).

One can recognise an RRM domain in the interval 25-106 (HRLWIGNLDP…KKLVVRWAHA (82 aa)). A disordered region spans residues 166–190 (VYSYFKPPDKKRTTPYSRTAWKSRR).

In Pongo abelii (Sumatran orangutan), this protein is Probable RNA-binding protein 18 (RBM18).